Consider the following 192-residue polypeptide: Fe/S biogenesis protein NfuA (192 aa).

Positions 149 and 152 each coordinate [4Fe-4S] cluster.

Belongs to the NfuA family. As to quaternary structure, homodimer. The cofactor is [4Fe-4S] cluster.

Its function is as follows. Involved in iron-sulfur cluster biogenesis. Binds a 4Fe-4S cluster, can transfer this cluster to apoproteins, and thereby intervenes in the maturation of Fe/S proteins. Could also act as a scaffold/chaperone for damaged Fe/S proteins. The chain is Fe/S biogenesis protein NfuA from Aeromonas hydrophila subsp. hydrophila (strain ATCC 7966 / DSM 30187 / BCRC 13018 / CCUG 14551 / JCM 1027 / KCTC 2358 / NCIMB 9240 / NCTC 8049).